Here is a 226-residue protein sequence, read N- to C-terminus: 7-cyano-7-deazaguanine synthase (226 aa).

10–20 (LSGGLDSATAA) provides a ligand contact to ATP. 4 residues coordinate Zn(2+): Cys-191, Cys-199, Cys-202, and Cys-205.

It belongs to the QueC family. Zn(2+) serves as cofactor.

The enzyme catalyses 7-carboxy-7-deazaguanine + NH4(+) + ATP = 7-cyano-7-deazaguanine + ADP + phosphate + H2O + H(+). It participates in purine metabolism; 7-cyano-7-deazaguanine biosynthesis. Its function is as follows. Catalyzes the ATP-dependent conversion of 7-carboxy-7-deazaguanine (CDG) to 7-cyano-7-deazaguanine (preQ(0)). The polypeptide is 7-cyano-7-deazaguanine synthase (Synechococcus sp. (strain CC9605)).